The primary structure comprises 300 residues: MEPPMEPSGGEQEPGAVRFLDLPWEDVLLPHVLNRVPLRQLLRLQRVSRAFRSLVQLHLAGLRRFDAAQVGPQIPRAALARLLRDAEGLQELALAPCHEWLSDEDLVPVLARNPQLRSVALGGCGQLSRRALGALAEGCPRLQRLSLAHCDWVDGLALRGLADRCPALEELDLTACRQLKDEAIVYLAQRRGAGLRSLSLAVNANVGDAAVQELARNCPELHHLDLTGCLRVGSDGVRTLAEYCPVLRSLRVRHCHHVAESSLSRLRKRGVDIDVEPPLHQALVLLQDMAGFAPFVNLQV.

An N-acetylmethionine modification is found at Met1. Residues 19–66 (FLDLPWEDVLLPHVLNRVPLRQLLRLQRVSRAFRSLVQLHLAGLRRFD) enclose the F-box domain. Residues 113–269 (NPQLRSVALG…ESSLSRLRKR (157 aa)) are interaction with SMURF1. LRR repeat units follow at residues 141-162 (RLQR…RGLA), 167-188 (ALEE…VYLA), 194-215 (GLRS…QELA), 220-241 (ELHH…RTLA), and 246-267 (VLRS…SRLR).

This sequence belongs to the FBXL15 family. In terms of assembly, part of the SCF (SKP1-CUL1-F-box) E3 ubiquitin-protein ligase complex SCF(FBXL15) composed of CUL1, SKP1, RBX1 and FBXL15.

Its subcellular location is the cytoplasm. The protein operates within protein modification; protein ubiquitination. In terms of biological role, substrate recognition component of a SCF (SKP1-CUL1-F-box protein) E3 ubiquitin-protein ligase complex which mediates the ubiquitination and subsequent proteasomal degradation of SMURF1, thereby acting as a positive regulator of the BMP signaling pathway. Required for dorsal/ventral pattern formation and bone mass maintenance. Also mediates ubiquitination of SMURF2 and WWP2. This chain is F-box/LRR-repeat protein 15 (FBXL15), found in Homo sapiens (Human).